The sequence spans 38 residues: Alpha-conotoxin LvIC (38 aa).

A propeptide spanning residues 1 to 21 is cleaved from the precursor; sequence SNGRNAAAGDKPSYWITLAIT. 2 cysteine pairs are disulfide-bonded: C23–C29 and C24–C34. A Glutamine amide modification is found at Q35.

The protein belongs to the conotoxin A superfamily. Post-translationally, the two analogs ([DelQ14]LvIC and [D1G,DelQ14]LvIC) are amidated at their N-terminal Cys. In terms of tissue distribution, expressed by the venom gland.

It is found in the secreted. Functionally, alpha-conotoxins bind to the nicotinic acetylcholine receptors (nAChR) and inhibit them. This synthetic peptide inhibits rat alpha-6/alpha-3-beta-4 nAChR (IC(50)=3.3 uM). The chain is Alpha-conotoxin LvIC from Conus lividus (Livid cone).